The chain runs to 452 residues: Tissue alpha-L-fucosidase (452 aa).

A signal peptide spans 1–17; that stretch reads MLLLLLLLLVAAAQAVA. Asn227, Asn254, Asn368, and Asn378 each carry an N-linked (GlcNAc...) asparagine glycan.

Belongs to the glycosyl hydrolase 29 family. In terms of assembly, homotetramer.

It is found in the lysosome. The catalysed reaction is an alpha-L-fucoside + H2O = L-fucose + an alcohol. The enzyme catalyses a neolactoside IV(2)-alpha-Fuc-nLc4Cer(d18:1(4E)) + H2O = a neolactoside nLc4Cer(d18:1(4E)) + L-fucose. It catalyses the reaction a neolactoside IV(2)-alpha-Fuc-nLc4Cer(d18:0) + H2O = a neolactoside nLc4Cer(d18:0) + L-fucose. In terms of biological role, alpha-L-fucosidase is responsible for hydrolyzing the alpha-1,6-linked fucose joined to the reducing-end N-acetylglucosamine of the carbohydrate moieties of glycoproteins. The protein is Tissue alpha-L-fucosidase (Fuca1) of Mus musculus (Mouse).